We begin with the raw amino-acid sequence, 393 residues long: Putative N(4)-(beta-N-acetylglucosaminyl)-L-asparaginase CG1827 (393 aa).

An N-terminal signal peptide occupies residues 1-23 (MRRHLRASLWILCLATMAFSILA). N-linked (GlcNAc...) asparagine glycans are attached at residues Asn49 and Asn64. 2 cysteine pairs are disulfide-bonded: Cys97/Cys102 and Cys196/Cys212. Catalysis depends on Thr243, which acts as the Nucleophile. Residues 271-274 (RVGD) and 294-297 (TGDG) contribute to the substrate site. An intrachain disulfide couples Cys354 to Cys381.

This sequence belongs to the Ntn-hydrolase family. In terms of assembly, heterotetramer of two alpha and two beta chains arranged as a dimer of alpha/beta heterodimers. Cleaved into an alpha and beta chain by autocatalysis; this activates the enzyme. The N-terminal residue of the beta subunit is responsible for the nucleophile hydrolase activity.

It catalyses the reaction N(4)-(beta-N-acetyl-D-glucosaminyl)-L-asparagine + H2O = N-acetyl-beta-D-glucosaminylamine + L-aspartate + H(+). Its function is as follows. Cleaves the GlcNAc-Asn bond which joins oligosaccharides to the peptide of asparagine-linked glycoproteins. The chain is Putative N(4)-(beta-N-acetylglucosaminyl)-L-asparaginase CG1827 from Drosophila melanogaster (Fruit fly).